We begin with the raw amino-acid sequence, 87 residues long: HssA/B-like protein 55 (87 aa).

The segment covering 1–13 has biased composition (polar residues); sequence MTILSAITSISRP. Residues 1 to 31 are disordered; that stretch reads MTILSAITSISRPNKSSKSVVSSNGGSSLSM. Residues 14-31 are compositionally biased toward low complexity; sequence NKSSKSVVSSNGGSSLSM.

This sequence belongs to the hssA/B family.

This Dictyostelium discoideum (Social amoeba) protein is HssA/B-like protein 55 (hssl55).